The chain runs to 68 residues: Metallothionein-3 (68 aa).

M1 is subject to N-acetylmethionine. The beta stretch occupies residues 1–30 (MDPETCPCPSGGSCTCADSCKCEGCKCTSC). The a divalent metal cation site is built by C6, C8, C14, C16, C20, C22, C25, C27, and C30. The interval 31–68 (KKSCCSCCPAECEKCAKDCVCKGGEGAEAEAEKCSCCE) is alpha. Position 33 is a phosphoserine (S33). A divalent metal cation is bound by residues C34, C35, C37, C38, C42, C45, C49, C51, C64, C66, and C67.

It belongs to the metallothionein superfamily. Type 1 family.

Functionally, binds heavy metals. Contains five zinc and one copper atoms per polypeptide chain and only a negligible amount of cadmium. The chain is Metallothionein-3 (MT3) from Macaca fascicularis (Crab-eating macaque).